Reading from the N-terminus, the 80-residue chain is Defensin-like protein 44 (80 aa).

Positions 1–27 are cleaved as a signal peptide; the sequence is MAITKTSVTLLLLIIMAASLSNFSVLA. 4 cysteine pairs are disulfide-bonded: Cys40–Cys79, Cys44–Cys67, Cys53–Cys77, and Cys57–Cys78.

Belongs to the DEFL family.

Its subcellular location is the secreted. The polypeptide is Defensin-like protein 44 (Arabidopsis thaliana (Mouse-ear cress)).